A 409-amino-acid chain; its full sequence is Peptidase T (409 aa).

H78 lines the Zn(2+) pocket. D80 is a catalytic residue. D140 contributes to the Zn(2+) binding site. The active-site Proton acceptor is E173. Residues E174, D196, and H379 each coordinate Zn(2+).

Belongs to the peptidase M20B family. It depends on Zn(2+) as a cofactor.

The protein localises to the cytoplasm. The catalysed reaction is Release of the N-terminal residue from a tripeptide.. Cleaves the N-terminal amino acid of tripeptides. This Salmonella choleraesuis (strain SC-B67) protein is Peptidase T.